Consider the following 248-residue polypeptide: 14-3-3 protein sigma (248 aa).

Serine 5, serine 74, and serine 248 each carry phosphoserine.

This sequence belongs to the 14-3-3 family. Homodimer. Interacts with KRT17 and SAMSN1. Found in a complex with XPO7, EIF4A1, ARHGAP1, VPS26A, VPS29 and VPS35. Interacts with GAB2. Interacts with SRPK2. Interacts with COPS6. Interacts with COP1; this interaction leads to proteasomal degradation. Interacts with the 'Thr-369' phosphorylated form of DAPK2. Interacts with PI4KB. Interacts with SLITRK1. Interacts with LRRK2; this interaction is dependent on LRRK2 phosphorylation. Interacts with PKP3 (via N-terminus); the interaction maintains the cytoplasmic pool of PKP3, facilitates PKP3 exchange at desmosomes and restricts PKP3 localization to existing desmosome cell junctions. Interacts with LCP2. In terms of processing, ubiquitinated. Ubiquitination by RFFL induces proteasomal degradation and indirectly regulates p53/TP53 activation. As to expression, expressed in dorsal skin (at protein level). Expressed in the basal layer of skin epithelium and in outer root sheath of hair follicle.

Its subcellular location is the cytoplasm. It is found in the nucleus. The protein resides in the secreted. In terms of biological role, adapter protein implicated in the regulation of a large spectrum of both general and specialized signaling pathways. Binds to a large number of partners, usually by recognition of a phosphoserine or phosphothreonine motif. Binding generally results in the modulation of the activity of the binding partner. Promotes cytosolic retention of GBP1 GTPase by binding to phosphorylated GBP1, thereby inhibiting the innate immune response. Also acts as a TP53/p53-regulated inhibitor of G2/M progression. When bound to KRT17, regulates protein synthesis and epithelial cell growth by stimulating Akt/mTOR pathway. Acts to maintain desmosome cell junction adhesion in epithelial cells via interacting with and sequestering PKP3 to the cytoplasm, thereby restricting its translocation to existing desmosome structures and therefore maintaining desmosome protein homeostasis. Also acts to facilitate PKP3 exchange at desmosome plaques, thereby maintaining keratinocyte intercellular adhesion. May also regulate MDM2 autoubiquitination and degradation and thereby activate p53/TP53. This Mus musculus (Mouse) protein is 14-3-3 protein sigma (Sfn).